The following is a 248-amino-acid chain: Probable transcriptional regulatory protein RPE_4771 (248 aa).

The segment at 1-21 (MAGHSQFKNIMHRKGRQDAQK) is disordered.

This sequence belongs to the TACO1 family.

The protein localises to the cytoplasm. The sequence is that of Probable transcriptional regulatory protein RPE_4771 from Rhodopseudomonas palustris (strain BisA53).